The following is a 1768-amino-acid chain: MAATSQVSSLLDLIMSLLDTATTYQHQESVKNEVAESLKTIGSHQPNVLLTACHQYLLQNPKLGAFKRAFVLQTISICVDNCEVVSKLDEQIIMLIINLATQEMNMTKDTDVEWAESSMEVLVTLAKNTRFVSHVIDAILQKFPPGQTTSPHRYIVLTMATIAVHNPFGLVPFLTDILSRTVPLLQHVKTDPLRCAWARAICSFCEAVRECETERPKEASEEYIGDHSRPNSASGHCQEVSNRATYSDQTEAVYDVIFSWIYSKDPKTRGEAAECVGELCLMIKQTRLVEDVKKIVTNMIPLYRKSYNESHMITQGICRFLEAACVDETCPLEPYLEDILNALFPNACLDPDDTTVTLSTQAIKNHSEAFRCFDVAATRFADRIVYYLLHKMQNVADSQKLGAINVLRHLLNATGQHMEDKRSLLTMGLKKLLAAENTTSIRVKRAIVQLCVALADHSYVDAEGGDYVIAFLVRNLVGPTEQESAAKKVEVDVAGLNQLRTQCAQALYTIANTCVCATKLLWPYLLEFICCERYTPVVGDLCKCLRTLVSREVEAGRKMDYVTGFDNPKVAGRHAVFARLFTSFCNAPLNGLLTRRAREAGGLIQAVAPWFHPSMEGPAARWSEKLEPLLDELSTTVSSGDSAPAELRGRKIARWHEACLDWLSACVAVVPEGDWRQDLAAAMGKQLDMYKELSDEKSFLLRCLGVTLARITAKQFVIDHMMLMFKSASHSVLTERQGCARGVGSIATSHMDLILIELENVSKWEHARKSSGIFGFIKDTMPIRQYPDIEMIHLRATLMLCYGHVVMACSLDTITQRLQNTIIVFLRNYFANSKQETVVREAMLETMRLIATAVHPSRIGGEWKFEARNELLAYAKDYLNGETPEWLTSSLRLLACKTTAALVQLEPPLSPADIEDIGTVLTRQILPMQREKSGLKTLAFDIFDYASSSVFSTFSGSSSSHTNIYMTPPLTANSVAEGPNGTPIHQRHRGIGGKMEDDESATIMDATMHQYGLALEQIVRMAPTTQTIMILLKILLPYYGKQADHERIRAVDMTVLVLRVYYECAEDISLGHASDFEPLSSLLGRLAPRLIDLLAHVRLQALSAIHWTLRLAYMHKGHGRDADQSLFSYSGFVEKYLTSGDVKLEGQKEKLAIEAIAQIIEYRLPQSQMQIYLSAIFEMLTDRQSHVSSAAAQLLTYAVMARGATLNAEAEILVTKMVEKLADIHHCVQTNTDVLAALVAFAVHQQQAVCDVLFKQPLPYSINITDAWECLSRDKLLFAVILDHLTELLGASLDQPFELMDSGGGVSAKVVNVEPCTYVAVLAEVVKNGEPESALMERLPLILTLLIHFICSVSDTQFPVMQKEGSKNPLIITPDLRRAAEKPAGMAVAAIKNLLNRTRSNMVIEDMNQARAWTDCLDKDSFIQAITVFIRSLVEQRPAWVSPLAKTMEEYANSESEPRRLAAVIIAASLIRRSTSENGEFNEQLLVKCIRRLEDSLTDPSLRIRKLCVKGLGELSECSSTDVISRFVHMAVEAAMSGLDDHGDRKDTVAIESIMALNKLVQLTNNDQLKSILPLVLLKIRPCFEKDSHTLRAASFSLFGELGSRVGENSEEFRGHLHTNIVSLLLHLNDDFEEVRQNCANSIYRLHGLLTSPNASICIERELKDGKQPASYNLFIKDFASILANSFPDRINQYALATSNYFKSSSARIRCNAAHLTGCLLDGLTAPLRATISRELVFTGLVALLKDSEDVNVRISATRAIANLHDFH.

6 HEAT repeats span residues 4 to 47 (TSQV…HQPN), 164 to 203 (VHNP…AICS), 816 to 856 (QRLQ…AVHP), 1166 to 1204 (QSQM…ARGA), 1483 to 1521 (EQLL…CSST), and 1731 to 1768 (TISR…HDFH).

This sequence belongs to the MROH1 family. In terms of assembly, homooligomer; homooligomerizes at lysosome scission sites.

Its subcellular location is the lysosome membrane. Lysosome fission factor. Recruited to lysosomes by rab-7 at scission sites and homooligomerizes to mediate the constriction and scission of lysosomal tubules. May sever membranes by inserting amphipathic helices into one bilayer leaflet. Lysosome fission is required to maintain their steady-state number, shape, size, composition and function, and to accomplish regeneration. This Caenorhabditis elegans protein is Maestro heat-like repeat-containing protein family member 1 homolog.